Consider the following 128-residue polypeptide: Cytochrome b (128 aa).

3 consecutive transmembrane segments (helical) span residues 25–45 (FGSM…FLAI), 69–90 (WIMQ…YIHI), and 105–125 (WLSG…XMCY). Positions 75 and 89 each coordinate heme b. An a ubiquinone-binding site is contributed by His126.

This sequence belongs to the cytochrome b family. The cytochrome bc1 complex contains 3 respiratory subunits (MT-CYB, CYC1 and UQCRFS1), 2 core proteins (UQCRC1 and UQCRC2) and probably 6 low-molecular weight proteins. Heme b serves as cofactor.

The protein localises to the mitochondrion inner membrane. Component of the ubiquinol-cytochrome c reductase complex (complex III or cytochrome b-c1 complex) that is part of the mitochondrial respiratory chain. The b-c1 complex mediates electron transfer from ubiquinol to cytochrome c. Contributes to the generation of a proton gradient across the mitochondrial membrane that is then used for ATP synthesis. The polypeptide is Cytochrome b (MT-CYB) (Crotalus viridis viridis (Prairie rattlesnake)).